We begin with the raw amino-acid sequence, 259 residues long: Phosphatidylglycerol--prolipoprotein diacylglyceryl transferase (259 aa).

4 helical membrane passes run 9-29 (IIFS…VVGI), 55-75 (FITY…VLLY), 92-112 (EGGM…YLFC), and 117-137 (INFL…LFLG). Arg-138 is a binding site for a 1,2-diacyl-sn-glycero-3-phospho-(1'-sn-glycerol). 3 helical membrane passes run 172-192 (QLYE…YATF), 201-221 (GLNS…IEIF), and 228-248 (IGFI…MLLL).

This sequence belongs to the Lgt family.

It is found in the cell inner membrane. The enzyme catalyses L-cysteinyl-[prolipoprotein] + a 1,2-diacyl-sn-glycero-3-phospho-(1'-sn-glycerol) = an S-1,2-diacyl-sn-glyceryl-L-cysteinyl-[prolipoprotein] + sn-glycerol 1-phosphate + H(+). Its pathway is protein modification; lipoprotein biosynthesis (diacylglyceryl transfer). Catalyzes the transfer of the diacylglyceryl group from phosphatidylglycerol to the sulfhydryl group of the N-terminal cysteine of a prolipoprotein, the first step in the formation of mature lipoproteins. The protein is Phosphatidylglycerol--prolipoprotein diacylglyceryl transferase of Rickettsia felis (strain ATCC VR-1525 / URRWXCal2) (Rickettsia azadi).